The chain runs to 88 residues: Small ribosomal subunit protein uS15 (88 aa).

This sequence belongs to the universal ribosomal protein uS15 family. In terms of assembly, part of the 30S ribosomal subunit. Forms a bridge to the 50S subunit in the 70S ribosome, contacting the 23S rRNA.

Functionally, one of the primary rRNA binding proteins, it binds directly to 16S rRNA where it helps nucleate assembly of the platform of the 30S subunit by binding and bridging several RNA helices of the 16S rRNA. In terms of biological role, forms an intersubunit bridge (bridge B4) with the 23S rRNA of the 50S subunit in the ribosome. This Metamycoplasma arthritidis (strain 158L3-1) (Mycoplasma arthritidis) protein is Small ribosomal subunit protein uS15.